The following is a 170-amino-acid chain: Lipoprotein signal peptidase (170 aa).

A run of 2 helical transmembrane segments spans residues Y71 to N91 and A97 to F116. Residues D122 and D140 contribute to the active site. Residues W131 to V151 form a helical membrane-spanning segment.

This sequence belongs to the peptidase A8 family.

It localises to the cell inner membrane. The enzyme catalyses Release of signal peptides from bacterial membrane prolipoproteins. Hydrolyzes -Xaa-Yaa-Zaa-|-(S,diacylglyceryl)Cys-, in which Xaa is hydrophobic (preferably Leu), and Yaa (Ala or Ser) and Zaa (Gly or Ala) have small, neutral side chains.. It participates in protein modification; lipoprotein biosynthesis (signal peptide cleavage). Functionally, this protein specifically catalyzes the removal of signal peptides from prolipoproteins. In Serratia marcescens, this protein is Lipoprotein signal peptidase.